Consider the following 608-residue polypeptide: Threonine--tRNA ligase (608 aa).

Residues Met-1–Asp-143 are editing domain. Catalytic stretches follow at residues Pro-194–Pro-490 and Lys-195–Pro-490. Zn(2+) contacts are provided by Cys-287, His-338, and His-459.

The protein belongs to the class-II aminoacyl-tRNA synthetase family. Homodimer. Requires Zn(2+) as cofactor.

The protein localises to the cytoplasm. It catalyses the reaction tRNA(Thr) + L-threonine + ATP = L-threonyl-tRNA(Thr) + AMP + diphosphate + H(+). Functionally, catalyzes the attachment of threonine to tRNA(Thr) in a two-step reaction: L-threonine is first activated by ATP to form Thr-AMP and then transferred to the acceptor end of tRNA(Thr). Also edits incorrectly charged L-seryl-tRNA(Thr). This is Threonine--tRNA ligase from Pyrobaculum aerophilum (strain ATCC 51768 / DSM 7523 / JCM 9630 / CIP 104966 / NBRC 100827 / IM2).